A 468-amino-acid polypeptide reads, in one-letter code: 3-isopropylmalate dehydratase large subunit (468 aa).

Residues Cys-347, Cys-407, and Cys-410 each contribute to the [4Fe-4S] cluster site.

This sequence belongs to the aconitase/IPM isomerase family. LeuC type 1 subfamily. In terms of assembly, heterodimer of LeuC and LeuD. [4Fe-4S] cluster serves as cofactor.

It carries out the reaction (2R,3S)-3-isopropylmalate = (2S)-2-isopropylmalate. The protein operates within amino-acid biosynthesis; L-leucine biosynthesis; L-leucine from 3-methyl-2-oxobutanoate: step 2/4. Functionally, catalyzes the isomerization between 2-isopropylmalate and 3-isopropylmalate, via the formation of 2-isopropylmaleate. In Synechocystis sp. (strain ATCC 27184 / PCC 6803 / Kazusa), this protein is 3-isopropylmalate dehydratase large subunit.